A 150-amino-acid polypeptide reads, in one-letter code: 3-dehydroquinate dehydratase (150 aa).

The active-site Proton acceptor is the tyrosine 23. Substrate is bound by residues asparagine 79, histidine 85, and aspartate 92. Histidine 105 functions as the Proton donor in the catalytic mechanism. Residues 106–107 (IS) and arginine 116 contribute to the substrate site.

It belongs to the type-II 3-dehydroquinase family. In terms of assembly, homododecamer.

It carries out the reaction 3-dehydroquinate = 3-dehydroshikimate + H2O. Its pathway is metabolic intermediate biosynthesis; chorismate biosynthesis; chorismate from D-erythrose 4-phosphate and phosphoenolpyruvate: step 3/7. In terms of biological role, catalyzes a trans-dehydration via an enolate intermediate. The sequence is that of 3-dehydroquinate dehydratase from Marinomonas sp. (strain MWYL1).